Consider the following 645-residue polypeptide: 1,4-alpha-glucan branching enzyme GlgB (645 aa).

Residue Asp-309 is the Nucleophile of the active site. The active-site Proton donor is Glu-352. Residues 619–645 (VKTRKGSKKQDGSKTKVRSNVTSRGKR) are disordered. The span at 636–645 (RSNVTSRGKR) shows a compositional bias: polar residues.

This sequence belongs to the glycosyl hydrolase 13 family. GlgB subfamily. As to quaternary structure, monomer.

The catalysed reaction is Transfers a segment of a (1-&gt;4)-alpha-D-glucan chain to a primary hydroxy group in a similar glucan chain.. The protein operates within glycan biosynthesis; glycogen biosynthesis. Catalyzes the formation of the alpha-1,6-glucosidic linkages in glycogen by scission of a 1,4-alpha-linked oligosaccharide from growing alpha-1,4-glucan chains and the subsequent attachment of the oligosaccharide to the alpha-1,6 position. This is 1,4-alpha-glucan branching enzyme GlgB from Bacillus cereus (strain G9842).